The chain runs to 684 residues: Probable metal-nicotianamine transporter YSL9 (684 aa).

Residues 1-10 show a composition bias toward basic residues; it reads MKQERRRKRQ. The tract at residues 1-55 is disordered; sequence MKQERRRKRQPGPPRLELVVAHPREEEMAGLDGGGDAEEGATHARGGGGAPPPWR. 14 helical membrane-spanning segments follow: residues 58-78, 82-102, 130-150, 174-194, 234-254, 295-315, 341-361, 402-422, 430-450, 462-482, 515-535, 568-588, 612-632, and 642-662; these read LTARGLVASLAVGAMYSVIVM, LTTGLVPTLNVSAALIAFVVL, CAVACYSIAVGGGFGSYLLGL, GIAWMTGFLLAVSFVGLLALV, VNGFTKYFAMSFFWSFFQWFY, LVNLSLLLGAILSWGVMWPLI, FICVALILGDGLYNFVKIVAL, LAFSGYLGLTFIAVIAIPMMF, VVIAYLLAPALGFCNAYGAGL, IALFILAAWAGKDSGVVAGLV, IIAQAIGTVMGCVISPLTFFL, FSALPQHCLQLCYGFFGFAVA, VPFLVGASFAIDMCIGSLIVF, and AALMVPAVASGLICGDGLWIF.

It belongs to the YSL (TC 2.A.67.2) family.

Its subcellular location is the membrane. May be involved in the transport of nicotianamine-chelated metals. This is Probable metal-nicotianamine transporter YSL9 (YSL9) from Oryza sativa subsp. japonica (Rice).